We begin with the raw amino-acid sequence, 291 residues long: RPE-retinal G protein-coupled receptor (291 aa).

Residues 1–15 (MAESGTLPTGFGELE) are Extracellular-facing. The helical transmembrane segment at 16–36 (VLAVGTVLLVEALSGLSLNIL) threads the bilayer. Residues 37-52 (TILSFCKTPELRTPSH) are Cytoplasmic-facing. Residues 53–73 (LLVLSLALADSGISLNALVAA) form a helical membrane-spanning segment. The Extracellular portion of the chain corresponds to 74–91 (TSSLLRRWPYGSEGCQAH). C88 and C162 are disulfide-bonded. Residues 92–112 (GFQGFVTALASICSSAAVAWG) form a helical membrane-spanning segment. Topologically, residues 113–130 (RYHHFCTRSRLDWNTAVS) are cytoplasmic. A helical transmembrane segment spans residues 131–151 (LVFFVWLSSAFWAALPLLGWG). At 152–175 (HYDYEPLGTCCTLDYSRGDRNFTS) the chain is on the extracellular side. A glycan (N-linked (GlcNAc...) asparagine) is linked at N172. A helical membrane pass occupies residues 176-196 (FLFTMAFFNFLLPLFITVVSY). At 197 to 219 (RLMEQKLGKTSRPPVNTVLPART) the chain is on the cytoplasmic side. A helical transmembrane segment spans residues 220–240 (LLLGWGPYALLYLYATIADAT). At 241-247 (SISPKLQ) the chain is on the extracellular side. A helical transmembrane segment spans residues 248-268 (MVPALIAKAVPTVNAMNYALG). K255 bears the N6-(retinylidene)lysine mark. Residues 269-291 (SEMVHRGIWQCLSPQRREHSREQ) are Cytoplasmic-facing.

Belongs to the G-protein coupled receptor 1 family. Opsin subfamily. Covalently binds all-trans- and 11-cis-retinal. In terms of tissue distribution, preferentially expressed at high levels in the retinal pigment epithelium (RPE) and Mueller cells of the neural retina.

It is found in the membrane. Receptor for all-trans- and 11-cis-retinal. Binds preferentially to the former and may catalyze the isomerization of the chromophore by a retinochrome-like mechanism. This is RPE-retinal G protein-coupled receptor (RGR) from Bos taurus (Bovine).